Reading from the N-terminus, the 254-residue chain is Type III pantothenate kinase (254 aa).

Position 6-13 (6-13) interacts with ATP; the sequence is DLGNSAIK. Substrate is bound by residues Tyr-99 and 106–109; that span reads GVDR. Asp-108 acts as the Proton acceptor in catalysis. A K(+)-binding site is contributed by Asp-128. Thr-131 contributes to the ATP binding site. Residue Thr-182 coordinates substrate.

It belongs to the type III pantothenate kinase family. In terms of assembly, homodimer. The cofactor is NH4(+). K(+) serves as cofactor.

Its subcellular location is the cytoplasm. The enzyme catalyses (R)-pantothenate + ATP = (R)-4'-phosphopantothenate + ADP + H(+). It functions in the pathway cofactor biosynthesis; coenzyme A biosynthesis; CoA from (R)-pantothenate: step 1/5. Catalyzes the phosphorylation of pantothenate (Pan), the first step in CoA biosynthesis. The chain is Type III pantothenate kinase from Halorhodospira halophila (strain DSM 244 / SL1) (Ectothiorhodospira halophila (strain DSM 244 / SL1)).